Here is a 399-residue protein sequence, read N- to C-terminus: MIITSLLDTDLYKFTMMQVVLHHFPAASVEYRFKCRTPGVDLVPYIDEIRAEVRSLCELRFTDSELDYLRRLRFVKSDFVDFLALFHLNEKYISITPSQKGGGEIDIEIKGPWLHTILFEIPVLAIVNEVYFRNTQRRPDYREGRGRLREKIKLLGAKPEFADCKIADYGTRRRFSKVWHEEVLRTLQDGLGPQFAGTSNVYYAMTHEITPLGTMAHEYLQACQALGPRLRDSQTYGLEMWAKEYRGDLGIALSDVYGMDAFLRDFDMYFCKLFDGARHDSGDPFDWGERLIKHYEENRCDPRTKVLVFSDALDIPKVMQLYARFRGRCKLAFGVGTNLTNDLGYQPLQIVIKMVRCNGQPVAKLSDSPGKSMCDDKAYLAYLRQVFGITQPPDDDAGK.

A Phosphohistidine; by autocatalysis modification is found at His-217.

Belongs to the NAPRTase family. Transiently phosphorylated on a His residue during the reaction cycle. Phosphorylation strongly increases the affinity for substrates and increases the rate of nicotinate D-ribonucleotide production. Dephosphorylation regenerates the low-affinity form of the enzyme, leading to product release.

The catalysed reaction is nicotinate + 5-phospho-alpha-D-ribose 1-diphosphate + ATP + H2O = nicotinate beta-D-ribonucleotide + ADP + phosphate + diphosphate. It functions in the pathway cofactor biosynthesis; NAD(+) biosynthesis; nicotinate D-ribonucleotide from nicotinate: step 1/1. Its function is as follows. Catalyzes the synthesis of beta-nicotinate D-ribonucleotide from nicotinate and 5-phospho-D-ribose 1-phosphate at the expense of ATP. The protein is Nicotinate phosphoribosyltransferase of Burkholderia mallei (strain ATCC 23344).